We begin with the raw amino-acid sequence, 259 residues long: Uridylate kinase (259 aa).

An ATP-binding site is contributed by 10 to 13; that stretch reads KLSG. A UMP-binding site is contributed by glycine 52. Glycine 53 and arginine 57 together coordinate ATP. Residues aspartate 72 and 134–141 each bind UMP; that span reads NGQPFLTT. The ATP site is built by tyrosine 168 and aspartate 171. Residues 236–259 are disordered; it reads ISSSPEKSEEFGNEVLASPAESTA.

It belongs to the UMP kinase family. As to quaternary structure, homohexamer.

It localises to the cytoplasm. The enzyme catalyses UMP + ATP = UDP + ADP. It participates in pyrimidine metabolism; CTP biosynthesis via de novo pathway; UDP from UMP (UMPK route): step 1/1. Its activity is regulated as follows. Inhibited by UTP. Its function is as follows. Catalyzes the reversible phosphorylation of UMP to UDP. The sequence is that of Uridylate kinase from Frankia casuarinae (strain DSM 45818 / CECT 9043 / HFP020203 / CcI3).